The sequence spans 867 residues: MTGRARARARGRPPGQEAAIPPVGAASAQKTLPSHPSEQRQSLQPCHPPPLTEEPGGRGRQRGPQDAPKTLGLQISAGFQELSLADRGGRRRDFHDLGVNTRQAIEHVRESKTGSSGAMIKLIANFFRLTSRPQWALYQYHVDYNPEMEARRLRSGLLFQHEDLIGKTHAFDGSILFLPKRLPNKVTEVYSKTRNGEDVRITITLTNELPPTSPTCLQFYNIIFRRLLKMMNFQQIGRNYYNPKDPVSIPNHRLMVWPGFTSSILQYEESIMLCADVSHKILRSETVLDFMYSLYEQVEERRFRDACAKELIGVIVLTKYNNRTYRVDDIDWDANPQCTFRRADGSEISYIDYYKRQYNQDISDLNQPVLISQYRRKRGNVTVGPVVLIPELCYLTGLTEKMRNDFNMMKDLAVHTRLSPEQRQREIGKLVDCMKKDECVQKELRDWGLSFDSSLLSFTGRVVQAEKILQAGNVFDYNPQFADWSRETRVAPLIHAKPLDNWLLIYTRRNYDAANMLLQNLFKVTPSMGIRMNKATMIEVDDRTEAYLRVLQQSITPDTNIVVCILSSTRKDKYDAIKKYLCTDCPIPSQCVVARTLSKPQTALAIVTKIALQMNCKMGGELWSVEIPLKQLMIVGIDCYHDTLSGKQSIAGFVASLNEKMTRWFSRCVVQSRGQEIVDGLKACLQTALREWFKWNKYLPSRIIVYRDGVGDGQLNTLVNYEVPQFLDCLKTVGKDYNPRLTVIVVKKRVSTRFFAQAGGGLKNPPPGTVVDIEVTRPEWYDFFIVSQAVRNGCVAPTHYNVVYDTSKLKPDHVQRLTYKLCHMYYNWSGVIRVPAPCQYAHKLAFLVGQSIHREPNLLLSDRLYYL.

Residues 1 to 11 (MTGRARARARG) show a composition bias toward basic residues. Residues 1–70 (MTGRARARAR…QRGPQDAPKT (70 aa)) form a disordered region. A compositionally biased stretch (polar residues) spans 28-44 (AQKTLPSHPSEQRQSLQ). The PAZ domain maps to 286-397 (TVLDFMYSLY…LIPELCYLTG (112 aa)). The segment at 324–326 (TYR) is required for binding 2'-O-methylated 3'-end of piRNAs. The tract at residues 485–621 (SRETRVAPLI…LQMNCKMGGE (137 aa)) is MID region. The region spanning 561–853 (IVVCILSSTR…LAFLVGQSIH (293 aa)) is the Piwi domain. Active-site residues include D638, E676, D708, and H842.

Belongs to the argonaute family. Piwi subfamily. The cofactor is Mg(2+). Post-translationally, methylated on arginine residues; required for the interaction with Tudor domain-containing protein and subsequent localization to the meiotic nuage, also named P granule.

The protein localises to the cytoplasm. In terms of biological role, endoribonuclease that plays a central role in postnatal germ cells by repressing transposable elements and preventing their mobilization, which is essential for the germline integrity. Acts via the piRNA metabolic process, which mediates the repression of transposable elements during meiosis by forming complexes composed of piRNAs and Piwi proteins and govern the methylation and subsequent repression of transposons. Directly binds methylated piRNAs, a class of 24 to 30 nucleotide RNAs that are generated by a Dicer-independent mechanism and are primarily derived from transposons and other repeated sequence elements. Strongly prefers a uridine in the first position of their guide (g1U preference, also named 1U-bias). Besides their function in transposable elements repression, piRNAs are probably involved in other processes during meiosis such as translation regulation. Not involved in the piRNA amplification loop, also named ping-pong amplification cycle. Acts as an endoribonuclease that cleaves transposon messenger RNAs. This Gallus gallus (Chicken) protein is Piwi-like protein 1 (PIWIL1).